A 547-amino-acid polypeptide reads, in one-letter code: MDPMELNNVSIEPDGDSCSGDSIQDSYTGMENSDKDAMNSQFANEDAESQKFLTNGFLGKKKLADYADEHHPGMTSFGMSSFNLSNAIMGSGILGLSYAMANTGIILFIIMLLTVAILSLYSVHLLLKTAKEGGSLIYEKLGEKAFGWPGKIGAFISITMQNIGAMSSYLFIIKYELPEVIRAFMGLEENTGEWYLNGNYLVLFVSVGIILPLSLLKNLGYLGYTSGFSLSCMVFFVSVVIYKKFQIPCPLPALDHNNGNLTFNNTLPIHMISLPNDSESSGVNFMMDYAHHNPAGLDEKQVAGPLHSNGVEYEAQGAEKCQPKYFVFNSRTAYAIPILAFAFVCHPEVLPIYSELKDRSRRKMQTVSNISISGMLVMYLLAALFGYLSFYGDVEDELLHAYSKVYTFDTALLMVRLAVLVAVTLTVPIVLFPIRTSVITLLFPRKPFSWLKHFGIAAIIIALNNILVILVPTIKYIFGFIGASSATMLIFILPAAFYLKLVKKEPLRSPQKIGALVFLVTGIIFMMGSMALIILDWIYNPPNPNHH.

The tract at residues 1-34 (MDPMELNNVSIEPDGDSCSGDSIQDSYTGMENSD) is disordered. At 1–104 (MDPMELNNVS…GLSYAMANTG (104 aa)) the chain is on the extracellular side. Positions 19–31 (SGDSIQDSYTGME) are enriched in polar residues. A Phosphoserine modification is found at serine 49. Residues 105 to 125 (IILFIIMLLTVAILSLYSVHL) traverse the membrane as a helical segment. At 126–151 (LLKTAKEGGSLIYEKLGEKAFGWPGK) the chain is on the cytoplasmic side. Residues 152 to 172 (IGAFISITMQNIGAMSSYLFI) form a helical membrane-spanning segment. Topologically, residues 173–195 (IKYELPEVIRAFMGLEENTGEWY) are extracellular. A helical membrane pass occupies residues 196 to 216 (LNGNYLVLFVSVGIILPLSLL). Over 217 to 220 (KNLG) the chain is Cytoplasmic. The helical transmembrane segment at 221 to 241 (YLGYTSGFSLSCMVFFVSVVI) threads the bilayer. Over 242-332 (YKKFQIPCPL…PKYFVFNSRT (91 aa)) the chain is Extracellular. A disulfide bridge connects residues cysteine 249 and cysteine 321. Asparagine 260, asparagine 264, and asparagine 276 each carry an N-linked (GlcNAc...) asparagine glycan. A helical transmembrane segment spans residues 333 to 353 (AYAIPILAFAFVCHPEVLPIY). Over 354-369 (SELKDRSRRKMQTVSN) the chain is Cytoplasmic. A helical membrane pass occupies residues 370–390 (ISISGMLVMYLLAALFGYLSF). Residues 391–411 (YGDVEDELLHAYSKVYTFDTA) are Extracellular-facing. Residues 412–432 (LLMVRLAVLVAVTLTVPIVLF) traverse the membrane as a helical segment. At 433–453 (PIRTSVITLLFPRKPFSWLKH) the chain is on the cytoplasmic side. A helical membrane pass occupies residues 454–474 (FGIAAIIIALNNILVILVPTI). Over 475 to 476 (KY) the chain is Extracellular. Residues 477-497 (IFGFIGASSATMLIFILPAAF) form a helical membrane-spanning segment. Residues 498–514 (YLKLVKKEPLRSPQKIG) are Cytoplasmic-facing. The chain crosses the membrane as a helical span at residues 515–535 (ALVFLVTGIIFMMGSMALIIL). The Extracellular segment spans residues 536 to 547 (DWIYNPPNPNHH).

This sequence belongs to the amino acid/polyamine transporter 2 family. Post-translationally, the disulfide bond plays an important role in substrate transport, but has no effect on trafficking to the cell surface. Detected in liver, in hepatocytes surrounding the central vein. Not detected in heart, kidney, brain, lung, small intestine, spleen and thymus. Highly expressed in placenta.

It localises to the cell membrane. The protein localises to the cell projection. It is found in the microvillus membrane. The enzyme catalyses L-alanine(in) + Na(+)(in) = L-alanine(out) + Na(+)(out). It catalyses the reaction L-methionine(in) + Na(+)(in) = L-methionine(out) + Na(+)(out). It carries out the reaction L-asparagine(in) + Na(+)(in) = L-asparagine(out) + Na(+)(out). The catalysed reaction is L-threonine(in) + Na(+)(in) = L-threonine(out) + Na(+)(out). The enzyme catalyses L-serine(in) + Na(+)(in) = L-serine(out) + Na(+)(out). It catalyses the reaction glycine(in) + Na(+)(in) = glycine(out) + Na(+)(out). It carries out the reaction L-glutamine(in) + Na(+)(in) = L-glutamine(out) + Na(+)(out). The catalysed reaction is L-histidine(in) + Na(+)(in) = L-histidine(out) + Na(+)(out). The enzyme catalyses L-cysteine(in) + Na(+)(in) = L-cysteine(out) + Na(+)(out). It catalyses the reaction L-proline(in) + Na(+)(in) = L-proline(out) + Na(+)(out). In terms of biological role, symporter that cotransports neutral amino acids and sodium ions from the extraccellular to the intracellular side of the cell membrane. The transport is electrogenic, pH dependent and partially tolerates substitution of Na(+) by Li(+). Preferentially transports smaller amino acids, such as glycine, L-alanine, L-serine, L-asparagine and L-threonine, followed by L-cysteine, L-histidine, L-proline and L-glutamine and L-methionine. The sequence is that of Sodium-coupled neutral amino acid transporter 4 from Mus musculus (Mouse).